A 600-amino-acid polypeptide reads, in one-letter code: NAD-dependent malic enzyme, mitochondrial (600 aa).

The N-terminal 68 residues, 1–68 (MTRTPFTLSL…NMPIAAPVRT (68 aa)), are a transit peptide targeting the mitochondrion. Arginine 93 is a fumarate binding site. Tyrosine 138 (proton donor) is an active-site residue. Arginine 194 contributes to the (S)-malate binding site. Arginine 194 contacts NAD(+). Lysine 212 (proton acceptor) is an active-site residue. A divalent metal cation contacts are provided by glutamate 283, aspartate 284, and aspartate 307. NAD(+)-binding residues include glycine 344 and alanine 347. Positions 458 and 502 each coordinate (S)-malate.

It belongs to the malic enzymes family. The cofactor is Mg(2+). Mn(2+) is required as a cofactor.

The protein resides in the mitochondrion matrix. The protein localises to the cytoplasm. Its subcellular location is the cytosol. It localises to the nucleus. The enzyme catalyses (S)-malate + NAD(+) = pyruvate + CO2 + NADH. It carries out the reaction oxaloacetate + H(+) = pyruvate + CO2. Its function is as follows. NAD-dependent mitochondrial malic enzyme that catalyzes the oxidative decarboxylation of malate to pyruvate. In Cryptococcus neoformans var. grubii serotype A (strain H99 / ATCC 208821 / CBS 10515 / FGSC 9487) (Filobasidiella neoformans var. grubii), this protein is NAD-dependent malic enzyme, mitochondrial.